The following is a 366-amino-acid chain: uncharacterized protein (366 aa).

An OBG-type G domain is found at 63 to 288 (ARVAMVGFPS…LLEKMWEYLA (226 aa)). GTP-binding positions include 69-76 (GFPSVGKS), 115-119 (DLPGI), and 246-249 (NKVD). The TGS domain occupies 288–365 (ALVRVYTKKP…DHEDVIQIVK (78 aa)).

It belongs to the TRAFAC class OBG-HflX-like GTPase superfamily. OBG GTPase family.

This is an uncharacterized protein from Caenorhabditis elegans.